The following is a 131-amino-acid chain: MLAKPYRLRKRQDFTAVYQQGKRWNSSHLALRTYPRRRSALALDGVKQSALNSREPPRIGISISQKVSKRAVVRNRIKRQLRAILRGLLPYLQPGWDLVIVVRPTAVECDYQQFLQELKQLLSEAEILHGY.

It belongs to the RnpA family. In terms of assembly, consists of a catalytic RNA component (M1 or rnpB) and a protein subunit.

The catalysed reaction is Endonucleolytic cleavage of RNA, removing 5'-extranucleotides from tRNA precursor.. Functionally, RNaseP catalyzes the removal of the 5'-leader sequence from pre-tRNA to produce the mature 5'-terminus. It can also cleave other RNA substrates such as 4.5S RNA. The protein component plays an auxiliary but essential role in vivo by binding to the 5'-leader sequence and broadening the substrate specificity of the ribozyme. This is Ribonuclease P protein component from Cyanothece sp. (strain PCC 7425 / ATCC 29141).